The chain runs to 398 residues: Putative defective protein IntQ (398 aa).

Positions 51–146 (LTIKELAEKF…NLNAVFQFGV (96 aa)) constitute a Core-binding (CB) domain. In terms of domain architecture, Tyr recombinase spans 167–378 (TIPDPLSREE…SENNNAQVAL (212 aa)). Residues R202, K236, R331, and H354 contribute to the active site. Y364 serves as the catalytic O-(3'-phospho-DNA)-tyrosine intermediate.

Belongs to the 'phage' integrase family.

Its function is as follows. Integrase is necessary for integration of the phage into the host genome by site-specific recombination. In conjunction with excisionase, integrase is also necessary for excision of the prophage from the host genome. The sequence is that of Putative defective protein IntQ (intQ) from Escherichia coli (strain K12).